The sequence spans 613 residues: Coiled-coil domain-containing protein 116 (613 aa).

The tract at residues 41–68 (KPGRVPHPPSTCGSSALQGQRRNKRHPQ) is disordered. The span at 51–60 (TCGSSALQGQ) shows a compositional bias: polar residues. Residues 79-104 (ESQVLDSLETVVEKATERMAAMKTEA) are a coiled coil. Disordered regions lie at residues 329–395 (CRDG…AQVA), 509–541 (RQAS…QATE), and 565–613 (MSAC…EDGV). Ser386 is modified (phosphoserine). A compositionally biased stretch (polar residues) spans 512 to 539 (SRLSTSHCSTETPSVQQEPATHTAQDQA). Positions 577 to 589 (KSKDMDNEGRDKA) are enriched in basic and acidic residues. Acidic residues predominate over residues 590 to 613 (EIEDEDEDEFKDEDQDEDKDEDGV).

The protein resides in the cytoplasm. Its subcellular location is the cytoskeleton. It localises to the microtubule organizing center. The protein localises to the centrosome. The chain is Coiled-coil domain-containing protein 116 (CCDC116) from Homo sapiens (Human).